We begin with the raw amino-acid sequence, 83 residues long: Consomatin Rs1 (83 aa).

The first 22 residues, 1–22 (MQTAYWVMVMMMVWITAPLSEG), serve as a signal peptide directing secretion. Residues 23–55 (GKLNNVIRGLVPDDVTPKRISQSLISRRRFDSR) constitute a propeptide that is removed on maturation. Cysteines 62 and 67 form a disulfide. Trp64 carries the D-tryptophan modification. Pro68 is subject to 4-hydroxyproline. A propeptide spanning residues 71–83 (LHGDNYDLKEKDK) is cleaved from the precursor.

This sequence belongs to the conotoxin C superfamily. Consomatin family. As to expression, expressed by the venom duct.

The protein resides in the secreted. In terms of biological role, moderately activates human somatostatin receptors (SSTR) with a preferential activation of SSTR1 and SSTR4. In vivo, does not cause behavioral changes in mice within a few minutes of intracranial injection, but causes a progressive loss of movement thereafter. Four to five hours after injection, mice recover, even with the highest dose tested. Shows antinociception and antihyperalgesia activities in two mouse models of acute pain, most probably by acting outside the central nervous system. In Conus raulsilvai (Sea snail), this protein is Consomatin Rs1.